Here is a 168-residue protein sequence, read N- to C-terminus: Phosphopantetheine adenylyltransferase (168 aa).

Ser9 contacts substrate. ATP contacts are provided by residues 9–10 (SF) and His17. Substrate is bound by residues Lys41, Leu73, and Arg87. ATP-binding positions include 88 to 90 (GLR), Glu98, and 123 to 129 (YAFLSSS).

The protein belongs to the bacterial CoaD family. Homohexamer. Requires Mg(2+) as cofactor.

The protein localises to the cytoplasm. It carries out the reaction (R)-4'-phosphopantetheine + ATP + H(+) = 3'-dephospho-CoA + diphosphate. It participates in cofactor biosynthesis; coenzyme A biosynthesis; CoA from (R)-pantothenate: step 4/5. Reversibly transfers an adenylyl group from ATP to 4'-phosphopantetheine, yielding dephospho-CoA (dPCoA) and pyrophosphate. This chain is Phosphopantetheine adenylyltransferase, found in Heliobacterium modesticaldum (strain ATCC 51547 / Ice1).